The sequence spans 44 residues: Photosystem I reaction center subunit IX (44 aa).

Residues 7–27 (YLSTAPVLAILCVSFLAALLI) traverse the membrane as a helical segment.

It belongs to the PsaJ family.

The protein localises to the plastid. It localises to the chloroplast thylakoid membrane. Functionally, may help in the organization of the PsaE and PsaF subunits. This chain is Photosystem I reaction center subunit IX, found in Pinus thunbergii (Japanese black pine).